We begin with the raw amino-acid sequence, 393 residues long: Chorismate synthase (393 aa).

The NADP(+) site is built by Arg-48 and Arg-54. Residues 125-127 (RSS), 238-239 (NA), Gly-278, 293-297 (KPTSS), and Arg-319 each bind FMN. Residues 355 to 393 (ACTTPKIPGHTGPREGQEEGPSDSEPKVEFADDPEPDEA) are disordered.

The protein belongs to the chorismate synthase family. In terms of assembly, homotetramer. FMNH2 serves as cofactor.

It carries out the reaction 5-O-(1-carboxyvinyl)-3-phosphoshikimate = chorismate + phosphate. The protein operates within metabolic intermediate biosynthesis; chorismate biosynthesis; chorismate from D-erythrose 4-phosphate and phosphoenolpyruvate: step 7/7. In terms of biological role, catalyzes the anti-1,4-elimination of the C-3 phosphate and the C-6 proR hydrogen from 5-enolpyruvylshikimate-3-phosphate (EPSP) to yield chorismate, which is the branch point compound that serves as the starting substrate for the three terminal pathways of aromatic amino acid biosynthesis. This reaction introduces a second double bond into the aromatic ring system. This is Chorismate synthase from Nitrosospira multiformis (strain ATCC 25196 / NCIMB 11849 / C 71).